Consider the following 245-residue polypeptide: Orotidine 5'-phosphate decarboxylase (245 aa).

Substrate is bound by residues D22, K44, 71 to 80 (DLKFHDIPNT), T131, R192, Q201, G221, and R222. K73 serves as the catalytic Proton donor.

It belongs to the OMP decarboxylase family. Type 1 subfamily. In terms of assembly, homodimer.

It catalyses the reaction orotidine 5'-phosphate + H(+) = UMP + CO2. It functions in the pathway pyrimidine metabolism; UMP biosynthesis via de novo pathway; UMP from orotate: step 2/2. Functionally, catalyzes the decarboxylation of orotidine 5'-monophosphate (OMP) to uridine 5'-monophosphate (UMP). In Escherichia coli O139:H28 (strain E24377A / ETEC), this protein is Orotidine 5'-phosphate decarboxylase.